A 416-amino-acid chain; its full sequence is Serine/threonine-protein phosphatase PP2A-like PPG1 (416 aa).

Residues Asp-62, His-64, Asp-90, and Asn-122 each contribute to the Mn(2+) site. The Proton donor role is filled by His-123. Mn(2+) is bound by residues His-173 and His-248. The interval 363–391 is disordered; sequence EDTLQGKSVNGINFDDELSTSDDTSGSGG.

Belongs to the PPP phosphatase family. PP-2A subfamily. Requires Mn(2+) as cofactor.

It carries out the reaction O-phospho-L-seryl-[protein] + H2O = L-seryl-[protein] + phosphate. The enzyme catalyses O-phospho-L-threonyl-[protein] + H2O = L-threonyl-[protein] + phosphate. Inhibited by okadaic acid, a specific inhibitor of serine/threonine phosphatases of types 1, 2A and 2B. In terms of biological role, serine/threonine-protein phosphatase that plays an important role in controlling colony morphology, filament extension and agar invasion. Down-regulates expression of NRG1 and affects the expression of multiple filament-specific transcripts in response to serum and 37 degrees Celsius. Plays a crucial role in virulence in a mouse model of systemic candidiasis. This is Serine/threonine-protein phosphatase PP2A-like PPG1 from Candida albicans (strain SC5314 / ATCC MYA-2876) (Yeast).